A 176-amino-acid chain; its full sequence is Outer membrane protein assembly factor BamE (176 aa).

An N-terminal signal peptide occupies residues 1–21 (MQNAKLMLTCLAFAGLAALAG). Residue Cys-22 is the site of N-palmitoyl cysteine attachment. Residue Cys-22 is the site of S-diacylglycerol cysteine attachment. Positions 121–176 (KEGSTTVTQPADQQKPEAQKEEPPKPGSTLEQLQREVDEAQPVPVPTPEPLDPSPQ) are disordered. Residues 123-132 (GSTTVTQPAD) are compositionally biased toward polar residues. Over residues 134–144 (QKPEAQKEEPP) the composition is skewed to basic and acidic residues. The segment covering 163–176 (VPVPTPEPLDPSPQ) has biased composition (pro residues).

It belongs to the BamE family. In terms of assembly, part of the Bam complex.

It localises to the cell outer membrane. In terms of biological role, part of the outer membrane protein assembly complex, which is involved in assembly and insertion of beta-barrel proteins into the outer membrane. May have a structural role in maintaining the cell envelope integrity. This Pseudomonas aeruginosa (strain ATCC 15692 / DSM 22644 / CIP 104116 / JCM 14847 / LMG 12228 / 1C / PRS 101 / PAO1) protein is Outer membrane protein assembly factor BamE.